Consider the following 418-residue polypeptide: Vasopressin V1a receptor (418 aa).

Low complexity predominate over residues 1–15; that stretch reads MRFSGSPSPGPSNSS. The interval 1 to 20 is disordered; that stretch reads MRFSGSPSPGPSNSSRWWPL. Residues 1 to 51 lie on the Extracellular side of the membrane; the sequence is MRFSGSPSPGPSNSSRWWPLDAGDANTSGDLAGLGEDGGPQADTRNEELAK. 2 N-linked (GlcNAc...) asparagine glycosylation sites follow: N13 and N26. A helical transmembrane segment spans residues 52–75; the sequence is LEIAVLAVIFVVAVLGNSSVLLAL. At 76–87 the chain is on the cytoplasmic side; the sequence is HRTPRKTSRMHL. The chain crosses the membrane as a helical span at residues 88 to 109; it reads FIRHLSLADLAVAFFQVLPQLG. Over 110–124 the chain is Extracellular; the sequence is WDITYRFRGPDGLCR. C123 and C202 are disulfide-bonded. Residues 125 to 146 traverse the membrane as a helical segment; that stretch reads VVKHMQVFAMFASAYMLVVMTA. Residues 147–167 are Cytoplasmic-facing; sequence DRYIAVCHPLKTLQQPARRSR. Residues 168 to 189 form a helical membrane-spanning segment; the sequence is LMIAAAWVLSFVLSTPQYFVFS. Over 190–217 the chain is Extracellular; the sequence is MVEVSNVTKTYDCWANFIHPWGLPAYVT. N195 carries N-linked (GlcNAc...) asparagine glycosylation. Residues 218-238 traverse the membrane as a helical segment; the sequence is WMTGSVFVAPVVILGTCYGFI. The Cytoplasmic portion of the chain corresponds to 239 to 293; it reads CYHIWRKVRGKTAGRQGGPAEGAGESALYRGVLHARCVSSVKTISRAKIRTVKMT. The helical transmembrane segment at 294–313 threads the bilayer; sequence FVIVTAYIVCWAPFFIIQMW. The Extracellular portion of the chain corresponds to 314–331; sequence SAWDKNFSWVESENPATA. N319 carries N-linked (GlcNAc...) asparagine glycosylation. Residues 332-351 traverse the membrane as a helical segment; sequence IPALLASLNSCCNPWIYMFF. The Cytoplasmic segment spans residues 352–418; it reads SGHLLQDCAQ…KSIKFIPVST (67 aa). 2 S-palmitoyl cysteine lipidation sites follow: C365 and C366. Residues 377–418 form a disordered region; that stretch reads GSDSMSRRQTSFTNNRSPTNSMGTWKDSPKSSKSIKFIPVST. The segment covering 383–399 has biased composition (polar residues); that stretch reads RRQTSFTNNRSPTNSMG. S404 is modified (phosphoserine).

It belongs to the G-protein coupled receptor 1 family. Vasopressin/oxytocin receptor subfamily.

The protein localises to the cell membrane. In terms of biological role, receptor for arginine vasopressin. The activity of this receptor is mediated by G proteins which activate a phosphatidyl-inositol-calcium second messenger system. The chain is Vasopressin V1a receptor (AVPR1A) from Ovis aries (Sheep).